A 156-amino-acid polypeptide reads, in one-letter code: Endoribonuclease YbeY (156 aa).

Zn(2+) contacts are provided by H117, H121, and H127.

This sequence belongs to the endoribonuclease YbeY family. Zn(2+) is required as a cofactor.

It localises to the cytoplasm. Single strand-specific metallo-endoribonuclease involved in late-stage 70S ribosome quality control and in maturation of the 3' terminus of the 16S rRNA. The sequence is that of Endoribonuclease YbeY from Shewanella piezotolerans (strain WP3 / JCM 13877).